Reading from the N-terminus, the 2007-residue chain is MAAEGASDPAGLSEGSGRDGAVDGCRTVYLFDRRGKDSELGDRALQVSEHADYAGFRASVCQTIGISSEEKFVITTTSRKEITCNNFDHTVKDGVTLYLLQSVDQSLLTATKERIDFLPHYDTLVKSGMYEYYASEGQNPLPFALAELIDNSLSATSRNNGVRRIQIKLLFDETQGKPAVAVVDNGRGMTSKQLNNWAVYRLSKFTRQGDFESDHSGYVRPLPVPRSLNSDISYFGVGGKQAVFFVGQSARMISKPIDSKDVHELVLSKEDFEKKEKNKEAIYSGYIRNRKPADSAHITNDDERFLHNLIEEEKEKDSFTAVVITGVQPEHIQYLKNYLHLWTRQLTHIYHYYIHGPKGNEISTAKAIGPFNNIDIEISLFEKGKTPKIINLREIQDDMQTLYINTASDSFEFKAHVEGDGVVEGVIRYHPFLYDRETFPDDPCFPSKLKDEDDDDDCFISEKAARGKRPIFECFWNGRLIPYTSVGDFDWCAPPKKRGLVPIECFNRISGALFTNDKFQVSTNKLTFMDLELKLKDKNTLFTRILNGQEQRMKIDREFALWLKDCHEKHDKQIKFTLFKGIITRPDLPTKKQGPWATFSAIEWDGKIYKAGQLVKTIKTLPLCYGSIVRFFLHGDHDGEVYATGGEVQIAMEPQALYDEIKTVPIAKLDRTVAEKTIRKYVEDEMARLPDRLSVTWPEGDELLPNEVRPAGTPIGALRIEILNKKGEAMQKLPGTSHGGSKKLLVELKVILHTSSGNKEIISHISQHGGKWPYWFKKMENIQKLGNYTLKLQVVLNESNADTYAGRSLPSKVIKFSVKEGKPEKFSFGLLDSPFRVGVPFNIPLELQDEFGHTTQLLSDIEPVLEASGLSLHYEGITKGPNCVIQGVVAKGPVNSCQGKNFNLKVILPGLKEDSQILKIRLLPGPPHQLKVKPDSEVLVIENGTAFPFQVEVVDESDNITAQPKLIVHCKFLGAPNLPVYTVDCSSSGTSILTGSPIQVQNIKKDQKTLTARIEIPSCKDVSPVEKTIKLLPSSHAACLQIFSVEEQKAIQIKHQDEVTWVAGDVIRNLIFQMYDEGEREINITPSLAEKIKVNWTPEVNKEHLVQGLLPDVQVPTSVKDVRYCHVSFQDDHVCLESAFTVRPLPDDPKHLKCELKGGKTVQMGQELQGEIVVIIADQYGNQISSFSPDSLSTLSITGDGLDSSNLKITLEANSQSVSVQGIRFTPGPPGPKDLCFTWREFSDFLRVQLVSGPPTKLLLMDWPELKESIPVINGRQLENPLIVQLCDQWDNPALVPNVKICLIKASSLRLLPSNQQHKTDDKGRANLGVFTVCAPRGEHTVQVKGVYNKSTIEGPTIKLTILPDPEKPIRLNVKYDQDASFIAGDIFTDFMVSVISESGSVIKNINPTRISMKMWKLSSGMSRPPANAETFSCNKIKGNDKEDGCFYFREKTIPNKVGAYCIQFDFMIDKTNILSSQQVIVDVLPNQPMKLVPDSQPATPAVSNVRSIASRTLVKDLRLSITDNYGNHTGMDLVGTVVATIKGFNEEDTDTPLFIGKVRTLEFPFVKGSAEITTLVLAENSPGRDSTEYFIIFEPRLSTVSGTLESYSLPFMFYNDVKKQQQMAALTKEKDELSKSITMYRSLFDANKQLVDEMKCQAEEAKLKETQLRNELKAYNIDIPATQQTTHIEALLEKKITEQNELKKRPRRLCTLPNYTKRSGDILGKIAHLAQIEDDRAAMVISWHLASDMDCVVTLTTDAARAIYDETQGRQQVLPLDSIYRKTLPDWKRPLPHFRNGKLHFKPFGNPVFARDLLTFPDNIEHCETVFGMLLGDTIILDNLDAANHYRKEVVKITHCPTLLTRDGDRIRSNGKFGGLQNKAPPMDKLRGMVFGAPVPKQCVVLGKQIDLIQQYRTALYRLSSVNEDLDNQLQYLHTPDMKKKKQELDEQEKSLKRIEQKLGMTPVRRCNESLCHSPKIEVTECPIPTKRMRRESTRQNRRPKGDVPN.

The residue at position 2 (alanine 2) is an N-acetylalanine. The segment at 111-702 (TKERIDFLPH…LSVTWPEGDE (592 aa)) is ATPase activity domain. Serine 833 carries the post-translational modification Phosphoserine. Lysine 1350 carries the post-translational modification N6-acetyllysine. Residue lysine 1375 forms a Glycyl lysine isopeptide (Lys-Gly) (interchain with G-Cter in SUMO2) linkage. Threonine 1500 carries the phosphothreonine modification. One can recognise an SMC hinge domain in the interval 1721-1848 (GDILGKIAHL…DNLDAANHYR (128 aa)). Position 1803 is an N6-succinyllysine (lysine 1803). Serine 1975 is subject to Phosphoserine. The disordered stretch occupies residues 1984 to 2007 (PIPTKRMRRESTRQNRRPKGDVPN).

Belongs to the SMC family. Highly divergent. In terms of assembly, homodimer; homodimerizes via its SMC hinge domain. Interacts with LRIF1. Sumoylated with SUMO1. As to expression, during embryogenesis, specifically expressed in immature olfactory sensory neurons.

It localises to the chromosome. The catalysed reaction is ATP + H2O = ADP + phosphate + H(+). Non-canonical member of the structural maintenance of chromosomes (SMC) protein family that plays a key role in epigenetic silencing by regulating chromatin architecture. Promotes heterochromatin formation in both autosomes and chromosome X, probably by mediating the merge of chromatin compartments. Plays a key role in chromosome X inactivation in females by promoting the spreading of heterochromatin. Recruited to inactivated chromosome X by Xist RNA and acts by mediating the merge of chromatin compartments: promotes random chromatin interactions that span the boundaries of existing structures, leading to create a compartment-less architecture typical of inactivated chromosome X. Required to facilitate Xist RNA spreading. Also required for silencing of a subset of clustered autosomal loci in somatic cells, such as the DUX4 locus. Has ATPase activity; may participate in structural manipulation of chromatin in an ATP-dependent manner as part of its role in gene expression regulation. Also plays a role in DNA repair: localizes to sites of DNA double-strand breaks in response to DNA damage to promote the repair of DNA double-strand breaks. Acts by promoting non-homologous end joining (NHEJ) and inhibiting homologous recombination (HR) repair. Required during preimplantation development, probably acts by regulating chromatin architecture. The polypeptide is Structural maintenance of chromosomes flexible hinge domain-containing protein 1 (Mus musculus (Mouse)).